The following is an 851-amino-acid chain: DNA mismatch repair protein MutS (851 aa).

602–609 lines the ATP pocket; it reads GPNMSGKS.

The protein belongs to the DNA mismatch repair MutS family.

Its function is as follows. This protein is involved in the repair of mismatches in DNA. It is possible that it carries out the mismatch recognition step. This protein has a weak ATPase activity. In Streptococcus pyogenes serotype M4 (strain MGAS10750), this protein is DNA mismatch repair protein MutS.